The sequence spans 136 residues: Alpha-2-purothionin (136 aa).

An N-terminal signal peptide occupies residues 1–27 (MGSKGLKGVMVCLLILGLVLEQVQVEG). Cystine bridges form between C30-C66, C31-C58, C39-C56, and C43-C52. Residues 73-136 (LALESNSDEP…GDAGLTSLDA (64 aa)) constitute a propeptide, acidic domain.

Belongs to the plant thionin (TC 1.C.44) family. 4 C-C subfamily.

It is found in the secreted. In terms of biological role, thionins are small plant proteins which are toxic to animal cells. They seem to exert their toxic effect at the level of the cell membrane. Their precise function is not known. In Triticum aestivum (Wheat), this protein is Alpha-2-purothionin (THI1.2).